We begin with the raw amino-acid sequence, 254 residues long: PF03932 family protein CutC (254 aa).

This sequence belongs to the CutC family.

Its subcellular location is the cytoplasm. The chain is PF03932 family protein CutC from Yersinia enterocolitica serotype O:8 / biotype 1B (strain NCTC 13174 / 8081).